Reading from the N-terminus, the 440-residue chain is Glycerol-3-phosphate dehydrogenase [NAD(+)] 2, mitochondrial (440 aa).

A mitochondrion-targeting transit peptide spans 1–16; that stretch reads MLAVRRLTRYTFLKRT. A phosphoserine mark is found at serine 70, serine 72, and serine 75. Residues 90–95, phenylalanine 122, and phenylalanine 178 contribute to the NAD(+) site; that span reads GSGNWG. Residue lysine 201 coordinates substrate. Residue alanine 234 participates in NAD(+) binding. Residue lysine 294 is the Proton acceptor of the active site. NAD(+)-binding residues include arginine 359 and glutamine 388. Substrate is bound at residue 359–360; the sequence is RN.

This sequence belongs to the NAD-dependent glycerol-3-phosphate dehydrogenase family.

It localises to the cytoplasm. The protein localises to the mitochondrion. The catalysed reaction is sn-glycerol 3-phosphate + NAD(+) = dihydroxyacetone phosphate + NADH + H(+). Its function is as follows. Catalyzes the production of glycerol under anaerobic growth conditions. Glycerol production serves as a redox sink by consuming the excess cytosolic NADH during anaerobic metabolism. The chain is Glycerol-3-phosphate dehydrogenase [NAD(+)] 2, mitochondrial from Saccharomyces cerevisiae (strain ATCC 204508 / S288c) (Baker's yeast).